The following is a 582-amino-acid chain: SHC-transforming protein 2 (582 aa).

2 disordered regions span residues 1–24 (MTQG…APTT) and 47–70 (GPAA…AGPG). The span at 8–20 (RAPPAPPAPPEPE) shows a compositional bias: pro residues. Residues 147–329 (LGPGVSYVVR…AGPEESAWGD (183 aa)) form the PID domain. The interval 330–486 (EEDSLEHNYY…PTEEQLRQEP (157 aa)) is CH1. Phosphotyrosine occurs at positions 338, 339, and 414. The segment at 460 to 481 (PLEDQWPSPPTRRAPVAPTEEQ) is disordered. In terms of domain architecture, SH2 spans 487–578 (WYHGRMSRRA…ESELHLRGVV (92 aa)).

Interacts with the Trk receptors in a phosphotyrosine-dependent manner and MEGF12. Once activated, binds to GRB2. Post-translationally, phosphorylated on tyrosines by the Trk receptors. Expressed in brain. Expressed at high level in the hypothalamus and at low level in the caudate nucleus.

Functionally, signaling adapter that couples activated growth factor receptors to signaling pathway in neurons. Involved in the signal transduction pathways of neurotrophin-activated Trk receptors in cortical neurons. This chain is SHC-transforming protein 2 (SHC2), found in Homo sapiens (Human).